Reading from the N-terminus, the 514-residue chain is Maturase K (514 aa).

The protein belongs to the intron maturase 2 family. MatK subfamily.

Its subcellular location is the plastid. The protein resides in the chloroplast. In terms of biological role, usually encoded in the trnK tRNA gene intron. Probably assists in splicing its own and other chloroplast group II introns. This Encephalartos altensteinii (Altenstein's bread tree) protein is Maturase K.